A 397-amino-acid chain; its full sequence is CCA-adding enzyme (397 aa).

2 residues coordinate ATP: Gly-26 and Arg-29. 2 residues coordinate CTP: Gly-26 and Arg-29. Mg(2+) contacts are provided by Asp-39 and Asp-41. 5 residues coordinate ATP: Arg-110, Asp-153, Arg-156, Arg-159, and Arg-162. Arg-110, Asp-153, Arg-156, Arg-159, and Arg-162 together coordinate CTP.

This sequence belongs to the tRNA nucleotidyltransferase/poly(A) polymerase family. Bacterial CCA-adding enzyme type 3 subfamily. Homodimer. Requires Mg(2+) as cofactor.

It carries out the reaction a tRNA precursor + 2 CTP + ATP = a tRNA with a 3' CCA end + 3 diphosphate. The enzyme catalyses a tRNA with a 3' CCA end + 2 CTP + ATP = a tRNA with a 3' CCACCA end + 3 diphosphate. Functionally, catalyzes the addition and repair of the essential 3'-terminal CCA sequence in tRNAs without using a nucleic acid template. Adds these three nucleotides in the order of C, C, and A to the tRNA nucleotide-73, using CTP and ATP as substrates and producing inorganic pyrophosphate. tRNA 3'-terminal CCA addition is required both for tRNA processing and repair. Also involved in tRNA surveillance by mediating tandem CCA addition to generate a CCACCA at the 3' terminus of unstable tRNAs. While stable tRNAs receive only 3'-terminal CCA, unstable tRNAs are marked with CCACCA and rapidly degraded. In Bacillus cereus (strain Q1), this protein is CCA-adding enzyme.